The chain runs to 206 residues: Pyridoxine/pyridoxamine 5'-phosphate oxidase (206 aa).

FMN is bound by residues 53–58 (RMVLLK), 68–69 (YT), lysine 75, and glutamine 97. A substrate-binding site is contributed by lysine 58. Residues tyrosine 115, arginine 119, and serine 123 each contribute to the substrate site. FMN is bound by residues 132–133 (QS) and tryptophan 177. 183–185 (RLH) is a binding site for substrate. Arginine 187 lines the FMN pocket.

This sequence belongs to the pyridoxamine 5'-phosphate oxidase family. Homodimer. It depends on FMN as a cofactor.

The catalysed reaction is pyridoxamine 5'-phosphate + O2 + H2O = pyridoxal 5'-phosphate + H2O2 + NH4(+). It catalyses the reaction pyridoxine 5'-phosphate + O2 = pyridoxal 5'-phosphate + H2O2. It participates in cofactor metabolism; pyridoxal 5'-phosphate salvage; pyridoxal 5'-phosphate from pyridoxamine 5'-phosphate: step 1/1. The protein operates within cofactor metabolism; pyridoxal 5'-phosphate salvage; pyridoxal 5'-phosphate from pyridoxine 5'-phosphate: step 1/1. Functionally, catalyzes the oxidation of either pyridoxine 5'-phosphate (PNP) or pyridoxamine 5'-phosphate (PMP) into pyridoxal 5'-phosphate (PLP). The polypeptide is Pyridoxine/pyridoxamine 5'-phosphate oxidase (Rhizobium johnstonii (strain DSM 114642 / LMG 32736 / 3841) (Rhizobium leguminosarum bv. viciae)).